The chain runs to 331 residues: UPF0194 membrane protein YbhG (331 aa).

A signal peptide spans 1-19 (MKKPVVIGLAIAAIVAVIA). The stretch at 107 to 208 (EEIAQAAAAV…LDLQDTTLIA (102 aa)) forms a coiled coil.

The protein belongs to the UPF0194 family.

The protein resides in the periplasm. The polypeptide is UPF0194 membrane protein YbhG (Salmonella paratyphi A (strain ATCC 9150 / SARB42)).